The following is a 354-amino-acid chain: WASH complex subunit 3 (354 aa).

Positions 76 to 354 (SSANVPVHNT…DDDDDDDESW (279 aa)) are disordered. The segment covering 107–143 (IPPPPPPPPPPMTGVPPPPPPPPPPPISKSNIPPPPA) has biased composition (pro residues). The segment covering 150–159 (ESDDDDEDNN) has biased composition (acidic residues). The span at 213–244 (PQPPQPQPQSPSPQPPPPPTTTSSIPVPPPPF) shows a compositional bias: pro residues. The span at 251-260 (SDDDDDDDEG) shows a compositional bias: acidic residues. Residues 277-290 (NNNSNSNSYSNNNN) are compositionally biased toward low complexity. Acidic residues-rich tracts occupy residues 293–307 (DDDD…DDDN) and 342–354 (DADD…DESW).

This sequence belongs to the CCDC53 family. Probable component of the WASH complex.

This Dictyostelium discoideum (Social amoeba) protein is WASH complex subunit 3.